A 347-amino-acid chain; its full sequence is NADH-ubiquinone oxidoreductase chain 2 (347 aa).

11 consecutive transmembrane segments (helical) span residues 3–23 (PPIL…VLTS), 25–45 (HWML…PILM), 59–79 (YFLM…INLL), 96–116 (TLMT…FWVP), 122–142 (ISLS…LSVL), 153–173 (LLLL…LNQT), 178–198 (ILAY…IYNP), 200–220 (MMLL…MLFM), 237–257 (MPLI…LPPL), 274–294 (EMII…YFYM), and 325–345 (FLPP…IISI).

Belongs to the complex I subunit 2 family. Core subunit of respiratory chain NADH dehydrogenase (Complex I) which is composed of 45 different subunits. Interacts with TMEM242.

It localises to the mitochondrion inner membrane. It carries out the reaction a ubiquinone + NADH + 5 H(+)(in) = a ubiquinol + NAD(+) + 4 H(+)(out). In terms of biological role, core subunit of the mitochondrial membrane respiratory chain NADH dehydrogenase (Complex I) which catalyzes electron transfer from NADH through the respiratory chain, using ubiquinone as an electron acceptor. Essential for the catalytic activity and assembly of complex I. The chain is NADH-ubiquinone oxidoreductase chain 2 from Paradoxurus hermaphroditus (Asian palm civet).